The primary structure comprises 158 residues: Transcription elongation factor GreA (158 aa).

A coiled-coil region spans residues 47 to 74 (NSEYDEAKNEQAFTEGRIIQLENMLKNA).

This sequence belongs to the GreA/GreB family.

Necessary for efficient RNA polymerase transcription elongation past template-encoded arresting sites. The arresting sites in DNA have the property of trapping a certain fraction of elongating RNA polymerases that pass through, resulting in locked ternary complexes. Cleavage of the nascent transcript by cleavage factors such as GreA or GreB allows the resumption of elongation from the new 3'terminus. GreA releases sequences of 2 to 3 nucleotides. The chain is Transcription elongation factor GreA from Clostridium perfringens (strain ATCC 13124 / DSM 756 / JCM 1290 / NCIMB 6125 / NCTC 8237 / Type A).